Reading from the N-terminus, the 136-residue chain is Peptide methionine sulfoxide reductase MsrB (136 aa).

A MsrB domain is found at 6-128 (EVSLYKELTD…NSAALSFTDE (123 aa)). Residues C45, C48, C94, and C97 each contribute to the Zn(2+) site. C117 functions as the Nucleophile in the catalytic mechanism.

This sequence belongs to the MsrB Met sulfoxide reductase family. Zn(2+) is required as a cofactor.

It carries out the reaction L-methionyl-[protein] + [thioredoxin]-disulfide + H2O = L-methionyl-(R)-S-oxide-[protein] + [thioredoxin]-dithiol. This is Peptide methionine sulfoxide reductase MsrB from Photorhabdus laumondii subsp. laumondii (strain DSM 15139 / CIP 105565 / TT01) (Photorhabdus luminescens subsp. laumondii).